A 70-amino-acid polypeptide reads, in one-letter code: DNA gyrase inhibitor YacG (70 aa).

Zn(2+) contacts are provided by Cys-21, Cys-24, Cys-36, and Cys-40.

The protein belongs to the DNA gyrase inhibitor YacG family. Interacts with GyrB. The cofactor is Zn(2+).

Functionally, inhibits all the catalytic activities of DNA gyrase by preventing its interaction with DNA. Acts by binding directly to the C-terminal domain of GyrB, which probably disrupts DNA binding by the gyrase. The sequence is that of DNA gyrase inhibitor YacG from Rhizobium meliloti (strain 1021) (Ensifer meliloti).